The following is a 401-amino-acid chain: Inositol phosphorylceramide synthase catalytic subunit AUR1 (401 aa).

Over Met-1–Ala-41 the chain is Cytoplasmic. The chain crosses the membrane as a helical span at residues Leu-42 to Asn-62. Residues Pro-63–Ala-64 are Lumenal-facing. A helical transmembrane segment spans residues Pro-65–Thr-85. Residues Ser-86–Gln-87 are Cytoplasmic-facing. Residues Phe-88–Phe-108 form a helical membrane-spanning segment. Over Pro-109–Leu-155 the chain is Lumenal. Residue Asn-132 is glycosylated (N-linked (GlcNAc...) asparagine). The chain crosses the membrane as a helical span at residues Phe-156–Val-176. Residues Leu-177–Gln-178 are Cytoplasmic-facing. Residues Gly-179–Pro-199 traverse the membrane as a helical segment. The Lumenal segment spans residues Ala-200–Ser-245. A helical transmembrane segment spans residues Val-246–Phe-266. Residues Cys-267–Tyr-268 are Cytoplasmic-facing. The chain crosses the membrane as a helical span at residues Cys-269–Met-289. The Lumenal segment spans residues Tyr-290–Leu-291. Residues Thr-292–Tyr-312 traverse the membrane as a helical segment. Topologically, residues Thr-313 to Ala-401 are cytoplasmic. The segment at Val-374–Ala-401 is disordered. The segment covering Ser-382–Ser-395 has biased composition (low complexity). Phosphoserine occurs at positions 392 and 395.

The protein belongs to the AUR1 family. In terms of assembly, component of the inositol phosphorylceramide synthase complex composed of at least AUR1 and KEI1.

Its subcellular location is the golgi apparatus. The protein resides in the golgi stack membrane. It carries out the reaction an N-(2R-hydroxy-very-long-chain fatty acyl)-(R)-4-hydroxysphingoid base + a 1,2-diacyl-sn-glycero-3-phospho-(1D-myo-inositol) = a 1D-myo-inositol-1-phospho-N-[(R)-2-hydroxy-very-long-chain fatty acyl]-(R)-4-hydroxysphingoid base + a 1,2-diacyl-sn-glycerol. With respect to regulation, inhibited by aureobasidin A (AbA), khafrefungin and rustmicin. Catalytic component of the inositol phosphorylceramide synthase which catalyzes the addition of a phosphorylinositol group onto ceramide to form inositol phosphorylceramide, an essential step in sphingolipid biosynthesis. The sequence is that of Inositol phosphorylceramide synthase catalytic subunit AUR1 from Saccharomyces cerevisiae (strain ATCC 204508 / S288c) (Baker's yeast).